The sequence spans 450 residues: tRNA modification GTPase MnmE (450 aa).

Residues Arg-23, Glu-79, and Lys-118 each contribute to the (6S)-5-formyl-5,6,7,8-tetrahydrofolate site. In terms of domain architecture, TrmE-type G spans 214–374; the sequence is GITLILVGKP…LKEHILNKVG (161 aa). Asn-224 serves as a coordination point for K(+). GTP is bound by residues 224–229, 243–249, and 268–271; these read NAGKSS, TSIAGTT, and DTAG. Ser-228 lines the Mg(2+) pocket. Residues Thr-243, Ile-245, and Thr-248 each contribute to the K(+) site. Thr-249 lines the Mg(2+) pocket. Residue Lys-450 participates in (6S)-5-formyl-5,6,7,8-tetrahydrofolate binding.

It belongs to the TRAFAC class TrmE-Era-EngA-EngB-Septin-like GTPase superfamily. TrmE GTPase family. As to quaternary structure, homodimer. Heterotetramer of two MnmE and two MnmG subunits. K(+) is required as a cofactor.

It localises to the cytoplasm. Its function is as follows. Exhibits a very high intrinsic GTPase hydrolysis rate. Involved in the addition of a carboxymethylaminomethyl (cmnm) group at the wobble position (U34) of certain tRNAs, forming tRNA-cmnm(5)s(2)U34. The polypeptide is tRNA modification GTPase MnmE (Francisella tularensis subsp. tularensis (strain WY96-3418)).